The primary structure comprises 248 residues: MYKLVLIRHGESTWNLENRFTGWVDVDLTETGAAQARQAGKLLKEAGMGFDVAYTSVLKRAIRTLWHVQDEMDLMWIPVRNEWRLNERHYGALAGLNKSETAAKFGDEQVLVWRRSYDTPPPALEPTDPRASYDDPRYANVPRNEIPLTECLKDTVARVMPLWNESIAPDIQSGKRVVIAAHGNSIRALVKYLDQISDDDIVGLNIPNGTPLVYELDADLRPLRHYYLGDQEAIAASLAAVASQGKAR.

Residues 8 to 15, 21 to 22, Arg60, 87 to 90, Lys98, and 114 to 115 each bind substrate; these read RHGESTWN, TG, ERHY, and RR. His9 functions as the Tele-phosphohistidine intermediate in the catalytic mechanism. Catalysis depends on Glu87, which acts as the Proton donor/acceptor. Residues 117 to 137 form a disordered region; that stretch reads YDTPPPALEPTDPRASYDDPR. Residues 127–137 are compositionally biased toward basic and acidic residues; sequence TDPRASYDDPR. 183–184 contacts substrate; it reads GN.

The protein belongs to the phosphoglycerate mutase family. BPG-dependent PGAM subfamily. As to quaternary structure, homodimer.

The enzyme catalyses (2R)-2-phosphoglycerate = (2R)-3-phosphoglycerate. It functions in the pathway carbohydrate degradation; glycolysis; pyruvate from D-glyceraldehyde 3-phosphate: step 3/5. Its function is as follows. Catalyzes the interconversion of 2-phosphoglycerate and 3-phosphoglycerate. This chain is 2,3-bisphosphoglycerate-dependent phosphoglycerate mutase, found in Cupriavidus taiwanensis (strain DSM 17343 / BCRC 17206 / CCUG 44338 / CIP 107171 / LMG 19424 / R1) (Ralstonia taiwanensis (strain LMG 19424)).